Here is a 339-residue protein sequence, read N- to C-terminus: Dihydroorotate dehydrogenase (quinone) (339 aa).

FMN contacts are provided by residues 62 to 66 and Thr86; that span reads AGMDK. Lys66 provides a ligand contact to substrate. Residue 111 to 115 coordinates substrate; it reads NRMGF. Positions 139 and 172 each coordinate FMN. Residue Asn172 coordinates substrate. Ser175 functions as the Nucleophile in the catalytic mechanism. Residue Asn177 participates in substrate binding. The FMN site is built by Lys217 and Thr245. 246-247 serves as a coordination point for substrate; that stretch reads NT. Residues Gly268, Gly297, and 318–319 each bind FMN; that span reads YS.

The protein belongs to the dihydroorotate dehydrogenase family. Type 2 subfamily. As to quaternary structure, monomer. Requires FMN as cofactor.

It is found in the cell membrane. It catalyses the reaction (S)-dihydroorotate + a quinone = orotate + a quinol. Its pathway is pyrimidine metabolism; UMP biosynthesis via de novo pathway; orotate from (S)-dihydroorotate (quinone route): step 1/1. Its function is as follows. Catalyzes the conversion of dihydroorotate to orotate with quinone as electron acceptor. This Shewanella putrefaciens (strain CN-32 / ATCC BAA-453) protein is Dihydroorotate dehydrogenase (quinone).